A 100-amino-acid polypeptide reads, in one-letter code: Large ribosomal subunit protein uL23 (100 aa).

Belongs to the universal ribosomal protein uL23 family. Part of the 50S ribosomal subunit. Contacts protein L29, and trigger factor when it is bound to the ribosome.

In terms of biological role, one of the early assembly proteins it binds 23S rRNA. One of the proteins that surrounds the polypeptide exit tunnel on the outside of the ribosome. Forms the main docking site for trigger factor binding to the ribosome. The polypeptide is Large ribosomal subunit protein uL23 (Vibrio cholerae serotype O1 (strain ATCC 39541 / Classical Ogawa 395 / O395)).